A 235-amino-acid polypeptide reads, in one-letter code: Orotidine 5'-phosphate decarboxylase (235 aa).

Substrate is bound by residues D17, K39, 66–75, T121, R182, Q191, and R212; that span reads DMKLLDIDHT. The Proton donor role is filled by K68.

This sequence belongs to the OMP decarboxylase family. Type 1 subfamily. Homodimer.

The catalysed reaction is orotidine 5'-phosphate + H(+) = UMP + CO2. It participates in pyrimidine metabolism; UMP biosynthesis via de novo pathway; UMP from orotate: step 2/2. Functionally, catalyzes the decarboxylation of orotidine 5'-monophosphate (OMP) to uridine 5'-monophosphate (UMP). The sequence is that of Orotidine 5'-phosphate decarboxylase from Bartonella bacilliformis.